We begin with the raw amino-acid sequence, 96 residues long: Co-chaperonin GroES (96 aa).

It belongs to the GroES chaperonin family. In terms of assembly, heptamer of 7 subunits arranged in a ring. Interacts with the chaperonin GroEL.

It is found in the cytoplasm. Together with the chaperonin GroEL, plays an essential role in assisting protein folding. The GroEL-GroES system forms a nano-cage that allows encapsulation of the non-native substrate proteins and provides a physical environment optimized to promote and accelerate protein folding. GroES binds to the apical surface of the GroEL ring, thereby capping the opening of the GroEL channel. This Neisseria gonorrhoeae (strain ATCC 700825 / FA 1090) protein is Co-chaperonin GroES.